The following is a 500-amino-acid chain: AMP phosphorylase (500 aa).

AMP contacts are provided by residues Gly166, 192–197, and Thr201; that span reads SRAVTS. Asp254 (proton donor) is an active-site residue. AMP is bound by residues Ser262 and Lys286.

This sequence belongs to the thymidine/pyrimidine-nucleoside phosphorylase family. Type 2 subfamily.

It catalyses the reaction AMP + phosphate = alpha-D-ribose 1,5-bisphosphate + adenine. It carries out the reaction CMP + phosphate = cytosine + alpha-D-ribose 1,5-bisphosphate. The enzyme catalyses UMP + phosphate = alpha-D-ribose 1,5-bisphosphate + uracil. Its function is as follows. Catalyzes the conversion of AMP and phosphate to adenine and ribose 1,5-bisphosphate (R15P). Exhibits phosphorylase activity toward CMP and UMP in addition to AMP. Functions in an archaeal AMP degradation pathway, together with R15P isomerase and RubisCO. This chain is AMP phosphorylase (deoA), found in Natronomonas pharaonis (strain ATCC 35678 / DSM 2160 / CIP 103997 / JCM 8858 / NBRC 14720 / NCIMB 2260 / Gabara) (Halobacterium pharaonis).